The sequence spans 84 residues: Small ribosomal subunit protein bS16 (84 aa).

Belongs to the bacterial ribosomal protein bS16 family.

This is Small ribosomal subunit protein bS16 from Deinococcus radiodurans (strain ATCC 13939 / DSM 20539 / JCM 16871 / CCUG 27074 / LMG 4051 / NBRC 15346 / NCIMB 9279 / VKM B-1422 / R1).